The chain runs to 487 residues: Cysteine--tRNA ligase (487 aa).

Cys27 is a binding site for Zn(2+). The 'HIGH' region motif lies at 29-39; it reads ATVQGLPHVGH. The interval 174–194 is disordered; sequence IDDMQGAPDADPRGKKDPRDF. Residues 183–194 are compositionally biased toward basic and acidic residues; sequence ADPRGKKDPRDF. Zn(2+)-binding residues include Cys225, His250, and Glu254. Residues 281-285 carry the 'KMSKS' region motif; that stretch reads KMSKS. Lys284 serves as a coordination point for ATP.

The protein belongs to the class-I aminoacyl-tRNA synthetase family. As to quaternary structure, monomer. Zn(2+) serves as cofactor.

Its subcellular location is the cytoplasm. It carries out the reaction tRNA(Cys) + L-cysteine + ATP = L-cysteinyl-tRNA(Cys) + AMP + diphosphate. The protein is Cysteine--tRNA ligase of Arthrobacter sp. (strain FB24).